A 218-amino-acid polypeptide reads, in one-letter code: Large ribosomal subunit protein uL3 (218 aa).

The interval 132 to 152 (FKGQGASHGTQAVHRRPGSIG) is disordered.

It belongs to the universal ribosomal protein uL3 family. In terms of assembly, part of the 50S ribosomal subunit. Forms a cluster with proteins L14 and L19.

Functionally, one of the primary rRNA binding proteins, it binds directly near the 3'-end of the 23S rRNA, where it nucleates assembly of the 50S subunit. This Rhodococcus erythropolis (strain PR4 / NBRC 100887) protein is Large ribosomal subunit protein uL3.